We begin with the raw amino-acid sequence, 162 residues long: Peptide methionine sulfoxide reductase MsrA (162 aa).

Residue Cys-16 is part of the active site.

The protein belongs to the MsrA Met sulfoxide reductase family.

The enzyme catalyses L-methionyl-[protein] + [thioredoxin]-disulfide + H2O = L-methionyl-(S)-S-oxide-[protein] + [thioredoxin]-dithiol. The catalysed reaction is [thioredoxin]-disulfide + L-methionine + H2O = L-methionine (S)-S-oxide + [thioredoxin]-dithiol. In terms of biological role, has an important function as a repair enzyme for proteins that have been inactivated by oxidation. Catalyzes the reversible oxidation-reduction of methionine sulfoxide in proteins to methionine. This chain is Peptide methionine sulfoxide reductase MsrA, found in Geobacter metallireducens (strain ATCC 53774 / DSM 7210 / GS-15).